A 389-amino-acid polypeptide reads, in one-letter code: Probable zinc transporter zip2 (389 aa).

Helical transmembrane passes span 6-26, 48-68, 88-108, 267-289, 305-325, 329-349, and 368-388; these read GWIL…GIYL, LVTG…ASVM, VFQF…NHFL, VLVA…LYLA, SCSL…GGIG, FLNF…LILS, and HSFI…IFDS.

Belongs to the ZIP transporter (TC 2.A.5) family.

The protein resides in the endoplasmic reticulum membrane. Probable zinc transporter that may mediate zinc remobilization from the endoplasmic reticulum under zinc limitation. The sequence is that of Probable zinc transporter zip2 (zip2) from Schizosaccharomyces pombe (strain 972 / ATCC 24843) (Fission yeast).